Consider the following 624-residue polypeptide: Chaperone protein HtpG (624 aa).

The tract at residues 1 to 336 (MNMKGQETRG…SNDLPLNVSR (336 aa)) is a; substrate-binding. The segment at 337–552 (EILQDSRITQ…ADEMSTQMAK (216 aa)) is b. Residues 553–624 (LFAAAGQQAP…IRRMNQLLTA (72 aa)) form a c region.

The protein belongs to the heat shock protein 90 family. As to quaternary structure, homodimer.

It is found in the cytoplasm. Its function is as follows. Molecular chaperone. Has ATPase activity. The sequence is that of Chaperone protein HtpG from Yersinia pestis bv. Antiqua (strain Antiqua).